Reading from the N-terminus, the 1142-residue chain is Potassium channel subfamily T member 2 (1142 aa).

At 1-63 the chain is on the cytoplasmic side; it reads MVDLESEVPP…KNQRSSLRIR (63 aa). A helical membrane pass occupies residues 64–84; sequence LFNFSLKLLSCLLYIIRVLLE. Topologically, residues 85–101 are extracellular; that stretch reads KPSQGNDWSHIFWVNRS. N-linked (GlcNAc...) asparagine glycosylation is present at Asn-99. The chain crosses the membrane as a helical span at residues 102–122; sequence LPLWGLQVSVALISLFETILL. Over 123–137 the chain is Cytoplasmic; that stretch reads GYLSYKGNIWEQILR. The chain crosses the membrane as a helical span at residues 138–158; the sequence is VPFILEIINAVPFIISIFWPT. The Extracellular portion of the chain corresponds to 159–160; that stretch reads LR. A helical membrane pass occupies residues 161-173; sequence NLFVPVFLNCWLA. The Cytoplasmic segment spans residues 174–198; it reads KHALENMINDLHRAIQRTQSAMFNQ. A helical transmembrane segment spans residues 199 to 219; that stretch reads VLILISTLLCLIFTCICGIQH. The Extracellular portion of the chain corresponds to 220–228; the sequence is LERIGKKLN. The segment at residues 229-249 is an intramembrane region (pore-forming); sequence LFDSLYFCIVTFSTVGFGDVT. Over 250–256 the chain is Extracellular; that stretch reads PETWSSK. The chain crosses the membrane as a helical span at residues 257 to 277; the sequence is LFVVAMICVALVVLPIQFEQL. Over 278 to 1142 the chain is Cytoplasmic; sequence AYLWMERQKS…VQDSREETQL (865 aa). 2 RCK N-terminal domains span residues 299 to 435 and 725 to 865; these read EKHV…DHVV and NKLI…CYSL. Disordered regions lie at residues 989-1044 and 1118-1142; these read DTKD…EKIT and PNSE…ETQL. The span at 1017 to 1037 shows a compositional bias: basic residues; it reads LRRKSMQWARRLSRKGPKHSG. A compositionally biased stretch (polar residues) spans 1118 to 1129; it reads PNSEPSRKNSIC.

Belongs to the potassium channel family. Calcium-activated (TC 1.A.1.3) subfamily. KCa4.2/KCNT2 sub-subfamily. As to quaternary structure, homotetramer. Forms heteromer with KCNT1; heteromeric channels differ from those of homomeric channels in their unitary conductance, kinetic behavior, subcellular localization, and response to activation of protein kinase C. Post-translationally, phosphorylated by protein kinase C. Phosphorylation of the C-terminal domain inhibits channel activity. Detected in brain, and at low levels in heart. Detected in brainstem, including auditory neurons such as the medial nucleus of the trapezoid body. Detected in the olfactory bulb, red nucleus, facial nucleus, pontine nucleus, oculomotor nucleus, substantia nigra, deep cerebellar nuclei, vestibular nucleus, and the thalamus. Detected in hippocampal CA1, CA2, and CA3 regions, the dentate gyrus, supraoptic nucleus, hypothalamus, dorsal root ganglion, and cortical layers II, III, and V. Detected in striatum cholinergic interneurons.

Its subcellular location is the cell membrane. The catalysed reaction is K(+)(in) = K(+)(out). Its activity is regulated as follows. Are normally in a closed state unless activated by an increase in intracellular Na(+) and Cl(-). Inhibited upon stimulation of G-protein coupled receptors, such as CHRM1 and GRM1. There is conflicting data about the effect of ATP on KNCT2 channels activity. Intracellular ATP was initially report to inhibit the channel activity. However, others studies conclude that KNCT2 channels are not inhibited by intracellular ATP. Sodium-activated and chloride-activated potassium channel. Produces rapidly activating outward rectifier K(+) currents. Contributes to regulate neuronal excitability. This Rattus norvegicus (Rat) protein is Potassium channel subfamily T member 2 (Kcnt2).